Here is a 178-residue protein sequence, read N- to C-terminus: Large ribosomal subunit protein uL6 (178 aa).

Belongs to the universal ribosomal protein uL6 family. In terms of assembly, part of the 50S ribosomal subunit.

Its function is as follows. This protein binds to the 23S rRNA, and is important in its secondary structure. It is located near the subunit interface in the base of the L7/L12 stalk, and near the tRNA binding site of the peptidyltransferase center. In Desulfatibacillum aliphaticivorans, this protein is Large ribosomal subunit protein uL6.